We begin with the raw amino-acid sequence, 274 residues long: MAKYQHYAIFEAVKEFVTSLCDCYQDEVDEPLHMLKAYLNKLNISMKESTKIINETIDFCKRNSKAIDKKDVSLFESGDKGIIFDEEAFIDVIEYLQKEDENQSVILDHLNSINYLIDGGVTEEELFLNKFVTSFASSFNSSSVNIPEFSEEGVSDESIEAIGNVIKPTIEKSLEDFQTKNLNVDRFMKSISFKVKEYIEKNDIPGIHKNELHDILDMTIENDVSELFEKKFEIFAKLSSSGLLAHLPLDKIMTLVPSNMEDSVQSELNNLSLE.

This is an uncharacterized protein from Invertebrate iridescent virus 6 (IIV-6).